Consider the following 228-residue polypeptide: Protein GrpE (228 aa).

2 disordered regions span residues 1 to 31 (MADE…NRAA) and 209 to 228 (GVSK…EGNG).

Belongs to the GrpE family. As to quaternary structure, homodimer.

Its subcellular location is the cytoplasm. Its function is as follows. Participates actively in the response to hyperosmotic and heat shock by preventing the aggregation of stress-denatured proteins, in association with DnaK and GrpE. It is the nucleotide exchange factor for DnaK and may function as a thermosensor. Unfolded proteins bind initially to DnaJ; upon interaction with the DnaJ-bound protein, DnaK hydrolyzes its bound ATP, resulting in the formation of a stable complex. GrpE releases ADP from DnaK; ATP binding to DnaK triggers the release of the substrate protein, thus completing the reaction cycle. Several rounds of ATP-dependent interactions between DnaJ, DnaK and GrpE are required for fully efficient folding. The sequence is that of Protein GrpE from Brucella anthropi (strain ATCC 49188 / DSM 6882 / CCUG 24695 / JCM 21032 / LMG 3331 / NBRC 15819 / NCTC 12168 / Alc 37) (Ochrobactrum anthropi).